The primary structure comprises 939 residues: Tyrosine-protein kinase Shark (939 aa).

The 97-residue stretch at 10 to 106 (WYHGNLSREA…GLPTKLTVPL (97 aa)) folds into the SH2 1 domain. ANK repeat units lie at residues 153–185 (DGQTALHLAALHSDEDILKHLLNAKVQVNSSDS), 186–218 (FGCQPLHYAARSKPASFIRTLISAQANVQGRNI), and 220–252 (NGYVPLHEAAKHGNLEAVQELLLAEAPPLPRTS). Residues 288-403 (WYHGTLTREE…GLPVSLKYPV (116 aa)) enclose the SH2 2 domain. Disordered regions lie at residues 410–446 (EVPSFATIPRSNMKPKAASPATPPTPVSPHSHHQHPH) and 476–505 (ALFDMNSLRKNKSKGKRSDSESSVSGSLAG). The span at 496–505 (ESSVSGSLAG) shows a compositional bias: polar residues. Residues 662–921 (LVLDREIGHG…PTFVYLTEFF (260 aa)) enclose the Protein kinase domain. Residues 668 to 676 (IGHGEFGSV) and Lys698 each bind ATP. Asp789 acts as the Proton acceptor in catalysis. Tyr927 carries the post-translational modification Phosphotyrosine.

Belongs to the protein kinase superfamily. Tyr protein kinase family. As to quaternary structure, interacts with drpr; this is required for the recruitment of drpr and glial cells to severed axons and for the phagocytosis of axonal debris by glial cells following axon injury. As to expression, gastrulation embryos show expression in ectodermal cells along the cephalic furrow and ventral midline. Proctodeum, stomodeum and their derived structures (foregut, atrium, pharynx, esophagus and hindgut) continue to show expression from stage 8-9 to late embryos. Other ectodermally derived structures (frontal sac, salivary gland and labium) and developing tracheal system also show expression.

It localises to the cytoplasm. It carries out the reaction L-tyrosyl-[protein] + ATP = O-phospho-L-tyrosyl-[protein] + ADP + H(+). In terms of biological role, following axon injury, required for recruitment of drpr and glial cells to severed axons and for glial clearance of severed axons from the central nervous system. Together with Src42a and drpr, promotes the migration of macrophages to sites of wounding as part of a signaling cascade where Scr42a detects production of hydrogen peroxide at wound sites which triggers phosphorylation of drpr and subsequent recruitment and activation of shark. May be involved in signal transduction on the apical surface of ectodermal epithelial cells, regulating their polarity during invagination. Crumbs (crb) may be the intracellular signal. The chain is Tyrosine-protein kinase Shark from Drosophila melanogaster (Fruit fly).